Consider the following 32-residue polypeptide: Phospholipase A2 (32 aa).

Ca(2+) contacts are provided by Y16, G18, and G20.

The cofactor is Ca(2+). Expressed by the venom gland.

Its subcellular location is the secreted. The enzyme catalyses a 1,2-diacyl-sn-glycero-3-phosphocholine + H2O = a 1-acyl-sn-glycero-3-phosphocholine + a fatty acid + H(+). PLA2 catalyzes the calcium-dependent hydrolysis of the 2-acyl groups in 3-sn-phosphoglycerides. The polypeptide is Phospholipase A2 (Micrurus lemniscatus (South American coral snake)).